The following is a 457-amino-acid chain: MANDITAHWKDLLRKRLASLKPDGRTEEEKKAEESELFSKYYTEWKGGEKGEDDSFKHIPRFYYRLPAEDEVLMQKLREESRAVFLQRKSRELLDNEELQNLWFLLDKHQVPPTTGDEAMISYESFLKVGEKAGTKCKLFFTARVYAKLLHNDPYGRISIMQFFNYVMRKVWLHQTRIGLSLYDVAGQGYLRESDLENYILELIPTLPQLDGLEKSFYSFYVCTAVRKFFFFLDPLHTGKIKIQDILACSFLDDLLELRDEELSKESQESNWFSAPSALRVYGQYLNLDKDHNGMLSKEELSRYGTGTLTSVFLDRVYQACLTYDGEMDYKTYLDFVLALENRKEPAALQYIFKLLDMENKGYLNVFALNYFFRAIQEQMKIHGQEPVSFQDVKDEIFDMVKPKDPYKITLQDLVNSGQGDTVSSILIDLNGFWTYENREVLVANDTDSNAADLDDT.

EF-hand domains follow at residues 276–311 (PSAL…TLTS) and 344–379 (KEPA…IQEQ). Asp-289, Asp-291, Asn-293, Met-295, and Glu-300 together coordinate Ca(2+).

It is found in the nucleus. Its subcellular location is the cytoplasm. In terms of biological role, possible role in the regulation of cell death. In Danio rerio (Zebrafish), this protein is Serine/threonine-protein phosphatase 2A regulatory subunit B'' subunit gamma (ppp2r3c).